An 894-amino-acid chain; its full sequence is CWF19-like protein 2 (894 aa).

Residues 1 to 147 (MATSMAAASG…DEKSGKDDTQ (147 aa)) form a disordered region. Residues 13–56 (ESAKSIEERKEQTRNARAEVLRQAKANFEKEERRKELKRLRGED) show a composition bias toward basic and acidic residues. Residues 13 to 107 (ESAKSIEERK…KKQKYEKNNE (95 aa)) are a coiled coil. Ser-75 carries the phosphoserine modification. Residues 76-99 (VKKKKKKDKHSKKAKKEKKKKSKK) are compositionally biased toward basic residues. Residues 128–147 (PDKEKAWKVKDEKSGKDDTQ) show a composition bias toward basic and acidic residues. Residues 166–281 (SSSSLKAEKE…AEKAASTKED (116 aa)) adopt a coiled-coil conformation. Lys-171 participates in a covalent cross-link: Glycyl lysine isopeptide (Lys-Gly) (interchain with G-Cter in SUMO2). The segment covering 270 to 284 (EDAEKAASTKEDYRR) has biased composition (basic and acidic residues). The disordered stretch occupies residues 270–483 (EDAEKAASTK…STFAGSPERE (214 aa)). A compositionally biased stretch (polar residues) spans 320-330 (TTDTAKNSNNE). The span at 332 to 352 (FIGDEKDKRPGSLETCRRESN) shows a compositional bias: basic and acidic residues. Residues Ser-360 and Ser-372 each carry the phosphoserine modification. Basic and acidic residues-rich tracts occupy residues 410 to 430 (KNSE…DKKH) and 440 to 473 (TDEH…RDTK). A phosphoserine mark is found at Ser-479 and Ser-484. The stretch at 502-530 (KAEMMGNMELAEQLKVQLEKANKFKETIT) forms a coiled coil. The segment at 561-583 (NTPGKSLESQGGRRKRQMVSTHE) is disordered. Lys-604 participates in a covalent cross-link: Glycyl lysine isopeptide (Lys-Gly) (interchain with G-Cter in SUMO2). The stretch at 644 to 675 (AAERERLGEEEENQRKKAIAEHRSLAAQMEKC) forms a coiled coil.

It belongs to the CWF19 family.

The chain is CWF19-like protein 2 (CWF19L2) from Homo sapiens (Human).